The primary structure comprises 308 residues: MINNVNQEILRAFVENNRPLAHDGRLPTYIPALMNANKQDFGIHITELDGNSHYYGSFQIPFTVQSISKIITLAMAIMDNGEELVFSRVGMEPTEDKFNSILPLEMSSAYPPNPMINAGAIVVTSLIKGRTAGEQFERILDFTRALADNKNIQVDENAFLSERETGNMNRSLAYYLKDANVINGNVEEILETYFRHCSILVTAEDLSRIAYIFANDGKDIEGKQLIPAKVCKIVRAIMAMSGFYDESGEFAVRVGIPAKSGVGGGIIGVVPGYMGIGLYGPALNNKGTSIVGFNVLEELTSYLQVGIY.

Residues Ser66, Asn117, Glu162, Asn169, Tyr193, Tyr244, and Val262 each coordinate substrate.

It belongs to the glutaminase family. As to quaternary structure, homotetramer.

The catalysed reaction is L-glutamine + H2O = L-glutamate + NH4(+). This Natranaerobius thermophilus (strain ATCC BAA-1301 / DSM 18059 / JW/NM-WN-LF) protein is Glutaminase.